Here is a 224-residue protein sequence, read N- to C-terminus: Glycerol-3-phosphate acyltransferase (224 aa).

5 consecutive transmembrane segments (helical) span residues 14-34 (FFPLAATLLGYLIGSLSFAVI), 64-84 (TAAIVTLLLDAAKGWLPVMLV), 98-118 (MALVGLAAFIGHLYPVFFNFA), 127-147 (LGVLLGLSPILALATGATWLI), and 160-180 (LTAAVFVPVYYVFGDGMAWYL).

Belongs to the PlsY family. As to quaternary structure, probably interacts with PlsX.

It localises to the cell inner membrane. The catalysed reaction is an acyl phosphate + sn-glycerol 3-phosphate = a 1-acyl-sn-glycero-3-phosphate + phosphate. It functions in the pathway lipid metabolism; phospholipid metabolism. Its function is as follows. Catalyzes the transfer of an acyl group from acyl-phosphate (acyl-PO(4)) to glycerol-3-phosphate (G3P) to form lysophosphatidic acid (LPA). This enzyme utilizes acyl-phosphate as fatty acyl donor, but not acyl-CoA or acyl-ACP. The sequence is that of Glycerol-3-phosphate acyltransferase from Albidiferax ferrireducens (strain ATCC BAA-621 / DSM 15236 / T118) (Rhodoferax ferrireducens).